Here is a 180-residue protein sequence, read N- to C-terminus: MSRIGRKPVPIPQNVQVEIKDGNCVSVKGPLGQIEKTFSPLLTIKKVDNQIVVERPNDEKFVKALHGLTRALINNMVLGVTQGFEKRLELQGTGYRARVQGNKLVLEVGFSHPVELEIPTGLTVSVQDNTKISVKGIDKELVGQFAAIVRSVRPAEPYKGKGIRYEGEKIRQKAGKAGKK.

The protein belongs to the universal ribosomal protein uL6 family. Part of the 50S ribosomal subunit.

Functionally, this protein binds to the 23S rRNA, and is important in its secondary structure. It is located near the subunit interface in the base of the L7/L12 stalk, and near the tRNA binding site of the peptidyltransferase center. The chain is Large ribosomal subunit protein uL6 from Dictyoglomus turgidum (strain DSM 6724 / Z-1310).